A 247-amino-acid chain; its full sequence is Carboxy-S-adenosyl-L-methionine synthase (247 aa).

S-adenosyl-L-methionine is bound by residues Tyr-39, 64-66 (GCS), 89-90 (DN), 117-118 (DI), Asn-132, and Arg-199.

It belongs to the class I-like SAM-binding methyltransferase superfamily. Cx-SAM synthase family. Homodimer.

It carries out the reaction prephenate + S-adenosyl-L-methionine = carboxy-S-adenosyl-L-methionine + 3-phenylpyruvate + H2O. Catalyzes the conversion of S-adenosyl-L-methionine (SAM) to carboxy-S-adenosyl-L-methionine (Cx-SAM). The sequence is that of Carboxy-S-adenosyl-L-methionine synthase from Klebsiella pneumoniae (strain 342).